Here is a 110-residue protein sequence, read N- to C-terminus: Iron-sulfur cluster assembly protein CyaY (110 aa).

Belongs to the frataxin family.

Functionally, involved in iron-sulfur (Fe-S) cluster assembly. May act as a regulator of Fe-S biogenesis. In Paracidovorax citrulli (strain AAC00-1) (Acidovorax citrulli), this protein is Iron-sulfur cluster assembly protein CyaY.